Consider the following 161-residue polypeptide: Large ribosomal subunit protein uL15 (161 aa).

A disordered region spans residues Met-1–Ala-41. Residues Arg-22 to Val-36 show a composition bias toward gly residues.

Belongs to the universal ribosomal protein uL15 family. Part of the 50S ribosomal subunit.

Functionally, binds to the 23S rRNA. In Caulobacter sp. (strain K31), this protein is Large ribosomal subunit protein uL15.